The primary structure comprises 289 residues: Undecaprenyl-diphosphatase (289 aa).

Transmembrane regions (helical) follow at residues 23–43 (LFLG…TAHL), 56–76 (GVAV…AYFW), 104–124 (SAIV…KLFW), 135–155 (IPAI…AENV), 165–185 (LSFW…IPGV), 210–230 (FLLG…QAFG), 235–255 (VDVF…WIAI), and 269–289 (IFIT…YLAF).

This sequence belongs to the UppP family.

The protein localises to the cell inner membrane. It catalyses the reaction di-trans,octa-cis-undecaprenyl diphosphate + H2O = di-trans,octa-cis-undecaprenyl phosphate + phosphate + H(+). Catalyzes the dephosphorylation of undecaprenyl diphosphate (UPP). Confers resistance to bacitracin. In Prochlorococcus marinus (strain SARG / CCMP1375 / SS120), this protein is Undecaprenyl-diphosphatase.